The chain runs to 70 residues: Cuticle protein 16 isoform b (70 aa).

This is Cuticle protein 16 isoform b from Limulus polyphemus (Atlantic horseshoe crab).